We begin with the raw amino-acid sequence, 288 residues long: Transmembrane and coiled-coil domain-containing protein 5A (288 aa).

Residues K10–E189 are a coiled coil. The chain crosses the membrane as a helical span at residues S227–I249.

It belongs to the TMCO5 family. As to expression, only detected in testis (at protein level).

Its subcellular location is the endoplasmic reticulum membrane. It is found in the nucleus membrane. The protein is Transmembrane and coiled-coil domain-containing protein 5A (Tmco5a) of Mus musculus (Mouse).